The primary structure comprises 115 residues: uncharacterized protein (115 aa).

This is an uncharacterized protein from Human herpesvirus 6A (strain Uganda-1102) (HHV-6 variant A).